Reading from the N-terminus, the 256-residue chain is Deoxyribose-phosphate aldolase (256 aa).

Aspartate 102 acts as the Proton donor/acceptor in catalysis. Catalysis depends on lysine 165, which acts as the Schiff-base intermediate with acetaldehyde. The active-site Proton donor/acceptor is the lysine 197.

It belongs to the DeoC/FbaB aldolase family. DeoC type 2 subfamily.

The protein resides in the cytoplasm. It carries out the reaction 2-deoxy-D-ribose 5-phosphate = D-glyceraldehyde 3-phosphate + acetaldehyde. It participates in carbohydrate degradation; 2-deoxy-D-ribose 1-phosphate degradation; D-glyceraldehyde 3-phosphate and acetaldehyde from 2-deoxy-alpha-D-ribose 1-phosphate: step 2/2. Its function is as follows. Catalyzes a reversible aldol reaction between acetaldehyde and D-glyceraldehyde 3-phosphate to generate 2-deoxy-D-ribose 5-phosphate. This is Deoxyribose-phosphate aldolase from Shewanella sp. (strain ANA-3).